A 399-amino-acid chain; its full sequence is 3-dehydroquinate synthase (399 aa).

The protein belongs to the archaeal-type DHQ synthase family.

The catalysed reaction is 2-amino-2,3,7-trideoxy-D-lyxo-hept-6-ulosonate + NAD(+) + H2O = 3-dehydroquinate + NH4(+) + NADH + H(+). Its function is as follows. Catalyzes the oxidative deamination and cyclization of 2-amino-3,7-dideoxy-D-threo-hept-6-ulosonic acid (ADH) to yield 3-dehydroquinate (DHQ), which is fed into the canonical shikimic pathway of aromatic amino acid biosynthesis. The sequence is that of 3-dehydroquinate synthase from Haloquadratum walsbyi (strain DSM 16790 / HBSQ001).